The chain runs to 132 residues: Small ribosomal subunit protein uS12 (132 aa).

D89 carries the post-translational modification 3-methylthioaspartic acid. The disordered stretch occupies residues 102-132 (LDTSGVADRKQSRSKYGAKVPKAGAAPAKKK). Residues 118–132 (GAKVPKAGAAPAKKK) show a composition bias toward low complexity.

The protein belongs to the universal ribosomal protein uS12 family. In terms of assembly, part of the 30S ribosomal subunit. Contacts proteins S8 and S17. May interact with IF1 in the 30S initiation complex.

Functionally, with S4 and S5 plays an important role in translational accuracy. Its function is as follows. Interacts with and stabilizes bases of the 16S rRNA that are involved in tRNA selection in the A site and with the mRNA backbone. Located at the interface of the 30S and 50S subunits, it traverses the body of the 30S subunit contacting proteins on the other side and probably holding the rRNA structure together. The combined cluster of proteins S8, S12 and S17 appears to hold together the shoulder and platform of the 30S subunit. The polypeptide is Small ribosomal subunit protein uS12 (Chlorobaculum tepidum (strain ATCC 49652 / DSM 12025 / NBRC 103806 / TLS) (Chlorobium tepidum)).